The primary structure comprises 474 residues: Aspartyl protease family protein At5g10770 (474 aa).

The first 25 residues, 1–25 (MSINRNLLNIIIILCICLNLGCNDG), serve as a signal peptide directing secretion. The 338-residue stretch at 132 to 469 (YIVTVGLGTP…DGAGGRVGFA (338 aa)) folds into the Peptidase A1 domain. Residues Asp150 and Asp352 contribute to the active site. Cys391 and Cys432 form a disulfide bridge. A lipid anchor (GPI-anchor amidated asparagine) is attached at Asn443. Residues 444–474 (AAIFGNVQQQTLEVVYDGAGGRVGFAPNGCS) constitute a propeptide, removed in mature form.

This sequence belongs to the peptidase A1 family.

Its subcellular location is the cell membrane. Its function is as follows. Probably not redundant with AED1 and not involved in restriction of salicylic acid (SA) or systemic acquired resistance (SAR) signaling. This is Aspartyl protease family protein At5g10770 from Arabidopsis thaliana (Mouse-ear cress).